We begin with the raw amino-acid sequence, 398 residues long: Acetate kinase (398 aa).

Asn-8 is a Mg(2+) binding site. Residue Lys-15 participates in ATP binding. Arg-90 provides a ligand contact to substrate. The active-site Proton donor/acceptor is the Asp-147. ATP-binding positions include 207–211 (HIGAG), 282–284 (DMR), and 330–334 (GVGEN). Glu-383 is a Mg(2+) binding site.

It belongs to the acetokinase family. In terms of assembly, homodimer. It depends on Mg(2+) as a cofactor. Requires Mn(2+) as cofactor.

Its subcellular location is the cytoplasm. It carries out the reaction acetate + ATP = acetyl phosphate + ADP. Its pathway is metabolic intermediate biosynthesis; acetyl-CoA biosynthesis; acetyl-CoA from acetate: step 1/2. Its function is as follows. Catalyzes the formation of acetyl phosphate from acetate and ATP. Can also catalyze the reverse reaction. In Limosilactobacillus fermentum (strain NBRC 3956 / LMG 18251) (Lactobacillus fermentum), this protein is Acetate kinase.